The sequence spans 492 residues: MPSFLVPSLVSSPVLLKLLFSPGPKTIWSLWQQPMLFQEATAFENMTKDWNYLEGSQKDCYRDTMLDSYENTVPQGSFLQLSMMPQRAGNDPPGVSNASEMEMEISNMREKFLMSVTKLVESKSYNSKVFSKEKYFQTIKEVKEAKEKGKKSSRDYRRAAKYDVISVQGTEKLIEATHGERDRIRYYVHKEELFDILHDTHLSIGHGGRTRMLKELQGKYGNVTKEVIVLYLTLCKQCHQKNPVPKRGLAPKPMTFKDIDSTCQVEILDMQSSADGEFKFILYYQDHSTKFIILRPLRTKQAHEVVSVLLDIFTILGTPSVLDSDSGVEFTNQVVHELNELWPDLKIVSGKYHPGQSQGSLEGASRDVKNMISTWMQSNHSCHWAKGLRFMQMVRNQAFDVSLQQSPFEAMFGYKAKFGLYSSNLPRETVATLQTEEELEIAEEQLENSLWIRQEERAEIGADRSDMDDDMDPTPEASEPSTSQGTSGLLCW.

In terms of domain architecture, KRAB spans 36 to 117; it reads LFQEATAFEN…MREKFLMSVT (82 aa). Ser115 carries the phosphoserine modification. The residue at position 117 (Thr117) is a Phosphothreonine. The 169-residue stretch at 247–415 folds into the Integrase catalytic domain; the sequence is RGLAPKPMTF…SPFEAMFGYK (169 aa). The stretch at 427–457 forms a coiled coil; sequence RETVATLQTEEELEIAEEQLENSLWIRQEER. A compositionally biased stretch (basic and acidic residues) spans 455 to 465; the sequence is EERAEIGADRS. The interval 455-492 is disordered; sequence EERAEIGADRSDMDDDMDPTPEASEPSTSQGTSGLLCW. Polar residues predominate over residues 479–492; it reads EPSTSQGTSGLLCW.

The sequence is that of KRAB-A domain-containing protein 2 (KRBA2) from Homo sapiens (Human).